We begin with the raw amino-acid sequence, 565 residues long: Urocanate hydratase (565 aa).

NAD(+)-binding positions include 58-59, glutamine 136, 182-184, glutamate 202, arginine 207, 245-246, 266-270, 276-277, and tyrosine 325; these read GG, GMG, NA, QTSAH, and YL. The active site involves cysteine 413. Glycine 495 contributes to the NAD(+) binding site.

This sequence belongs to the urocanase family. NAD(+) serves as cofactor.

It is found in the cytoplasm. The enzyme catalyses 4-imidazolone-5-propanoate = trans-urocanate + H2O. It participates in amino-acid degradation; L-histidine degradation into L-glutamate; N-formimidoyl-L-glutamate from L-histidine: step 2/3. Its function is as follows. Catalyzes the conversion of urocanate to 4-imidazolone-5-propionate. The sequence is that of Urocanate hydratase from Vibrio vulnificus (strain CMCP6).